A 156-amino-acid polypeptide reads, in one-letter code: Ribosomal RNA large subunit methyltransferase H (156 aa).

S-adenosyl-L-methionine is bound by residues leucine 73, glycine 104, and 123-128 (LSSLTL).

This sequence belongs to the RNA methyltransferase RlmH family. As to quaternary structure, homodimer.

The protein resides in the cytoplasm. It carries out the reaction pseudouridine(1915) in 23S rRNA + S-adenosyl-L-methionine = N(3)-methylpseudouridine(1915) in 23S rRNA + S-adenosyl-L-homocysteine + H(+). Specifically methylates the pseudouridine at position 1915 (m3Psi1915) in 23S rRNA. The polypeptide is Ribosomal RNA large subunit methyltransferase H (Bordetella petrii (strain ATCC BAA-461 / DSM 12804 / CCUG 43448)).